Consider the following 128-residue polypeptide: Histone H2A type 1-J (128 aa).

Residues 1-22 (MSGRGKQGGKARAKAKTRSSRA) are disordered. N-acetylserine is present on serine 2. A Phosphoserine; by RPS6KA5 modification is found at serine 2. Arginine 4 carries the post-translational modification Citrulline; alternate. Arginine 4 bears the Symmetric dimethylarginine; by PRMT5; alternate mark. Lysine 6 carries the N6-(2-hydroxyisobutyryl)lysine modification. Positions 7–19 (QGGKARAKAKTRS) are enriched in basic residues. Lysine 10 carries the N6-(2-hydroxyisobutyryl)lysine; alternate modification. N6-(beta-hydroxybutyryl)lysine; alternate occurs at positions 10 and 14. An N6-lactoyllysine; alternate modification is found at lysine 10. The residue at position 10 (lysine 10) is an N6-succinyllysine; alternate. Residue lysine 14 forms a Glycyl lysine isopeptide (Lys-Gly) (interchain with G-Cter in ubiquitin); alternate linkage. Residue lysine 16 forms a Glycyl lysine isopeptide (Lys-Gly) (interchain with G-Cter in ubiquitin) linkage. At lysine 37 the chain carries N6-(2-hydroxyisobutyryl)lysine; alternate. At lysine 37 the chain carries N6-(beta-hydroxybutyryl)lysine; alternate. Position 37 is an N6-crotonyllysine; alternate (lysine 37). N6-(2-hydroxyisobutyryl)lysine is present on residues lysine 75 and lysine 76. Lysine 96 carries the post-translational modification N6-(2-hydroxyisobutyryl)lysine; alternate. The residue at position 96 (lysine 96) is an N6-(beta-hydroxybutyryl)lysine; alternate. The residue at position 96 (lysine 96) is an N6-succinyllysine; alternate. The residue at position 96 (lysine 96) is an N6-glutaryllysine; alternate. Lysine 100 is subject to N6-glutaryllysine. An N5-methylglutamine modification is found at glutamine 105. Lysine 119 is subject to N6-(2-hydroxyisobutyryl)lysine; alternate. Lysine 119 bears the N6-(beta-hydroxybutyryl)lysine; alternate mark. N6-crotonyllysine; alternate is present on residues lysine 119 and lysine 120. N6-glutaryllysine; alternate occurs at positions 119 and 120. Lysine 120 participates in a covalent cross-link: Glycyl lysine isopeptide (Lys-Gly) (interchain with G-Cter in ubiquitin); alternate. Residue threonine 121 is modified to Phosphothreonine; by DCAF1. An N6-crotonyllysine; alternate modification is found at lysine 126. Lysine 126 is subject to N6-glutaryllysine; alternate.

This sequence belongs to the histone H2A family. As to quaternary structure, the nucleosome is a histone octamer containing two molecules each of H2A, H2B, H3 and H4 assembled in one H3-H4 heterotetramer and two H2A-H2B heterodimers. The octamer wraps approximately 147 bp of DNA. Post-translationally, deiminated on Arg-4 in granulocytes upon calcium entry. In terms of processing, monoubiquitination of Lys-120 (H2AK119Ub) by RING1, TRIM37 and RNF2/RING2 complex gives a specific tag for epigenetic transcriptional repression and participates in X chromosome inactivation of female mammals. It is involved in the initiation of both imprinted and random X inactivation. Ubiquitinated H2A is enriched in inactive X chromosome chromatin. Ubiquitination of H2A functions downstream of methylation of 'Lys-27' of histone H3 (H3K27me). H2AK119Ub by RNF2/RING2 can also be induced by ultraviolet and may be involved in DNA repair. Monoubiquitination of Lys-120 (H2AK119Ub) by TRIM37 may promote transformation of cells in a number of breast cancers. Following DNA double-strand breaks (DSBs), it is ubiquitinated through 'Lys-63' linkage of ubiquitin moieties by the E2 ligase UBE2N and the E3 ligases RNF8 and RNF168, leading to the recruitment of repair proteins to sites of DNA damage. Ubiquitination at Lys-14 and Lys-16 (H2AK13Ub and H2AK15Ub, respectively) in response to DNA damage is initiated by RNF168 that mediates monoubiquitination at these 2 sites, and 'Lys-63'-linked ubiquitin are then conjugated to monoubiquitin; RNF8 is able to extend 'Lys-63'-linked ubiquitin chains in vitro. Deubiquitinated by USP51 at Lys-14 and Lys-16 (H2AK13Ub and H2AK15Ub, respectively) after damaged DNA is repaired. H2AK119Ub and ionizing radiation-induced 'Lys-63'-linked ubiquitination (H2AK13Ub and H2AK15Ub) are distinct events. Phosphorylation on Ser-2 (H2AS1ph) is enhanced during mitosis. Phosphorylation on Ser-2 by RPS6KA5/MSK1 directly represses transcription. Acetylation of H3 inhibits Ser-2 phosphorylation by RPS6KA5/MSK1. Phosphorylation at Thr-121 (H2AT120ph) by DCAF1 is present in the regulatory region of many tumor suppresor genes and down-regulates their transcription. Post-translationally, glutamine methylation at Gln-105 (H2AQ104me) by FBL is specifically dedicated to polymerase I. It is present at 35S ribosomal DNA locus and impairs binding of the FACT complex. In terms of processing, symmetric dimethylation on Arg-4 by the PRDM1/PRMT5 complex may play a crucial role in the germ-cell lineage. Crotonylation (Kcr) is specifically present in male germ cells and marks testis-specific genes in post-meiotic cells, including X-linked genes that escape sex chromosome inactivation in haploid cells. Crotonylation marks active promoters and enhancers and confers resistance to transcriptional repressors. It is also associated with post-meiotically activated genes on autosomes. Post-translationally, lactylated in macrophages by EP300/P300 by using lactoyl-CoA directly derived from endogenous or exogenous lactate, leading to stimulates gene transcription.

Its subcellular location is the nucleus. The protein resides in the chromosome. In terms of biological role, core component of nucleosome. Nucleosomes wrap and compact DNA into chromatin, limiting DNA accessibility to the cellular machineries which require DNA as a template. Histones thereby play a central role in transcription regulation, DNA repair, DNA replication and chromosomal stability. DNA accessibility is regulated via a complex set of post-translational modifications of histones, also called histone code, and nucleosome remodeling. The protein is Histone H2A type 1-J of Homo sapiens (Human).